Here is a 4367-residue protein sequence, read N- to C-terminus: Dynein heavy chain, cytoplasmic (4367 aa).

Residues 1-13 are compositionally biased toward pro residues; the sequence is MMDSVPSPPPQPS. Positions 1-20 are disordered; that stretch reads MMDSVPSPPPQPSPDANGVA. Positions 1–1904 are stem; sequence MMDSVPSPPP…HIKMANAKLN (1904 aa). 5 coiled-coil regions span residues 676–693, 1176–1215, 1327–1351, 1557–1574, and 1637–1668; these read ARQIERQLDQYMKKVEQV, IKFASRLGNRMREVYAELEKARKDLEGQAMTANSTAEAVR, LTHFEQRITKLQEESAMVAKAKEAL, YKEFEEEASSWEEKLNRV, and NIPNVQKSLERLAELLNKIQKALGEYLEKERV. AAA regions lie at residues 1905–2130, 2202–2460, 2566–2815, and 2909–3179; these read YGFE…VLVS, EAIR…FTVA, EVNT…WVRG, and TFCE…QGKI. An ATP-binding site is contributed by 1943-1950; the sequence is GPAGTGKT. A coiled-coil region spans residues 2195–2218; sequence ASLEKLQEAIRRLAAERQLVVNDI. ATP contacts are provided by residues 2240-2247, 2605-2612, and 2947-2954; these read GNSGSGKS, GPPGSGKT, and GVSGSGKT. Coiled-coil stretches lie at residues 3193–3296, 3423–3481, and 3778–3809; these read QYVK…LARA, PLRE…SRVQ, and VIETLETLKTEAAEISAKMSNTEGVMAEVEQI. Residues 3193 to 3481 are stalk; the sequence is QYVKLYNEKR…AIKAEMSRVQ (289 aa). 2 AAA regions span residues 3565–3794 and 4003–4215; these read LSTA…EISA and AERF…VIDT.

It belongs to the dynein heavy chain family. As to quaternary structure, consists of at least two heavy chains and a number of intermediate and light chains.

It is found in the cytoplasm. It localises to the cytoskeleton. In terms of biological role, cytoplasmic dynein acts as a motor for the intracellular retrograde motility of vesicles and organelles along microtubules. Dynein has ATPase activity; the force-producing power stroke is thought to occur on release of ADP. Required to maintain uniform nuclear distribution in hyphae. In Neurospora crassa (strain ATCC 24698 / 74-OR23-1A / CBS 708.71 / DSM 1257 / FGSC 987), this protein is Dynein heavy chain, cytoplasmic (ro-1).